The chain runs to 76 residues: Conotoxin VnMEKL-021 (76 aa).

Positions 1-19 are cleaved as a signal peptide; it reads MQKLTILLLVAAVLMSTQA. The propeptide occupies 20–37; it reads LIKGGGEKRPKEKIKFLS. 3 disulfide bridges follow: Cys51–Cys65, Cys58–Cys69, and Cys64–Cys73.

Belongs to the conotoxin O2 superfamily. As to expression, expressed by the venom duct.

The protein resides in the secreted. The polypeptide is Conotoxin VnMEKL-021 (Conus ventricosus (Mediterranean cone)).